We begin with the raw amino-acid sequence, 295 residues long: Acetaldehyde dehydrogenase (295 aa).

Position 11 to 14 (11 to 14 (SGNI)) interacts with NAD(+). Catalysis depends on Cys127, which acts as the Acyl-thioester intermediate. NAD(+) contacts are provided by residues 158–166 (SAGPGTRSN) and Asn269.

It belongs to the acetaldehyde dehydrogenase family.

The catalysed reaction is acetaldehyde + NAD(+) + CoA = acetyl-CoA + NADH + H(+). The protein is Acetaldehyde dehydrogenase of Brevibacillus brevis (strain 47 / JCM 6285 / NBRC 100599).